The primary structure comprises 428 residues: Gamma-glutamyl phosphate reductase (428 aa).

It belongs to the gamma-glutamyl phosphate reductase family.

Its subcellular location is the cytoplasm. It catalyses the reaction L-glutamate 5-semialdehyde + phosphate + NADP(+) = L-glutamyl 5-phosphate + NADPH + H(+). Its pathway is amino-acid biosynthesis; L-proline biosynthesis; L-glutamate 5-semialdehyde from L-glutamate: step 2/2. Catalyzes the NADPH-dependent reduction of L-glutamate 5-phosphate into L-glutamate 5-semialdehyde and phosphate. The product spontaneously undergoes cyclization to form 1-pyrroline-5-carboxylate. The sequence is that of Gamma-glutamyl phosphate reductase from Clostridium tetani (strain Massachusetts / E88).